The sequence spans 32 residues: ilv operon leader peptide (32 aa).

In Yersinia pestis, this protein is ilv operon leader peptide (ilvL).